A 119-amino-acid polypeptide reads, in one-letter code: Developmental pluripotency-associated protein 5B/5C (119 aa).

Residues 24-86 enclose the KH; atypical domain; that stretch reads PEVFQVQSLV…SIKVRAKWLL (63 aa).

Belongs to the KHDC1 family.

Its subcellular location is the cytoplasm. Involved in the maintenance of embryonic stem (ES) cell pluripotency. Dispensable for self-renewal of pluripotent ES cells and establishment of germ cells. Associates with specific target mRNAs. In Mus musculus (Mouse), this protein is Developmental pluripotency-associated protein 5B/5C.